The following is a 641-amino-acid chain: MSDEGPGTGPGNGLGQKEDTSGPDGSSGSGPQRRGGDNHGRGRGRGRGRGGGRPGAPGGSGSGPRHRDGVRRPQKRPSCIGCKGAHGGTGAGGGAGAGGAGAGGAGAGGAGAGGAGAGGAGAGGAGAGGAGAGGAGAGGAGAGGGAGAGGAGAGGAGAGGGAGAGGGAGAGGGAGAGGGAGAGGGAGAGGGAGAGGGAGAGGGAGAGGGAGAGGAGAGGAGAGGGAGAGGGAGAGGGAGAGGGAGAGGGAGAGGGAGAGGGAGAGGGAGAGGGAGAGGGAGAGGGAGAGGGAGAGGGAGAGGGAGAGGGAGAGGGAGAGGGAGAGGGGRGRGGSGGRGRGGSGGRGRGGSGGRRGRGRERARGGSRERARGRGRGRGEKRPRSPSSQSSSSGSPPRRPPPGRRPFFHPVAEADYFEYHQEGGPDGEPDMPPGAIEQGPADDPGEGPSTGPRGQGDGGRRKKGGWYGKHRGEGGSSQKFENIAEGLRLLLARCHVERTTEDGNWVAGVFVYGGSKTSLYNLRRGIGLAIPQCRLTPLSRLPFGMAPGPGPQPGPLRESIVCYFIVFLQTHIFAEGLKDAIKDLVLPKPAPTCNIKVTVCSFDDGVDLPPWFPPMVEGAAAEGDDGDDGDEGGDGDEGEEGQE.

Residues 1–14 show a composition bias toward gly residues; sequence MSDEGPGTGPGNGL. Disordered stretches follow at residues 1-124 and 234-475; these read MSDE…GAGG and AGGG…GGSS. Positions 22–32 are enriched in low complexity; sequence GPDGSSGSGPQ. An interaction with host C1QBP/P32 region spans residues 40–60; it reads GRGRGRGRGRGGGRPGAPGGS. Positions 40 to 67 are chromosome-tethering GR1; sequence GRGRGRGRGRGGGRPGAPGGSGSGPRHR. Over residues 41 to 50 the composition is skewed to basic residues; the sequence is RGRGRGRGRG. 3 stretches are compositionally biased toward gly residues: residues 51 to 62, 84 to 124, and 234 to 352; these read GGRPGAPGGSGS, GAHG…GAGG, and AGGG…GSGG. Positions 65–89 are UR1; that stretch reads RHRDGVRRPQKRPSCIGCKGAHGGT. Positions 90–325 are GAr; the sequence is GAGGGAGAGG…AGAGGGAGAG (236 aa). Residues 325 to 376 are interaction with host C1QBP/P32; it reads GGGGRGRGGSGGRGRGGSGGRGRGGSGGRRGRGRERARGGSRERARGRGRGR. The chromosome-tethering GR2 stretch occupies residues 328–378; sequence GRGRGGSGGRGRGGSGGRGRGGSGGRRGRGRERARGGSRERARGRGRGRGE. Residues 358–381 are compositionally biased toward basic and acidic residues; it reads RERARGGSRERARGRGRGRGEKRP. The interval 379–386 is nuclear localization signal; the sequence is KRPRSPSS. Positions 383 to 394 are enriched in low complexity; the sequence is SPSSQSSSSGSP. 2 positions are modified to phosphoserine: S385 and S393. The interaction with host CSNK2B stretch occupies residues 387–395; that stretch reads QSSSSGSPP. The interaction with host USP7 stretch occupies residues 436–450; sequence QGPADDPGEGPSTGP. Residues 452–607 are DBD/DD; it reads GQGDGGRRKK…CSFDDGVDLP (156 aa). DNA-binding residues include K460, K461, and Y518. The active-site For site-specific DNA cleavage activity is the Y518. The disordered stretch occupies residues 612–641; sequence PMVEGAAAEGDDGDDGDEGGDGDEGEEGQE. Residues 620–641 are compositionally biased toward acidic residues; sequence EGDDGDDGDEGGDGDEGEEGQE.

This sequence belongs to the herpesviridae EBNA1 family. As to quaternary structure, homodimer. Dimers can assemble into higher-order oligomers like a homohexamer. Binding to the DS element involves 2 dimers of EBNA1. Interacts with human USP7; this interaction is independent and simultaneous to EBNA1 interaction with CSNK2B as well as necessary for PML nuclear bodies disruption by EBNA1. Interacts with host CSNK2B (via KSSR motif); the interaction requires phosphorylation of EBNA1, is independent and simultaneous to EBNA1 interaction with USP7 as well as necessary for PML nuclear bodies disruption by EBNA1. EBNA1, USP7 and CSNK2B form a ternary complex. EBNA1, USP7 and CSNK2B form a ternary complex. Interacts with human EBP2; it is not clear if this interaction is linked with the ability of EBNA1 to associate with host mitotic chromosomes. Interacts with BGLF4; this interaction facilitates the switch from latent to lytic DNA replication by down-regulating EBNA1 replication function. Interacts with human PAX5; this interaction promotes EBNA1-dependent transcription. Interacts with host KPNA1/Importin subunit alpha-5; this interaction allows the nuclear import of EBNA1. Interacts with host KPNA2/Importin subunit alpha-1; this interaction allows the nuclear import of EBNA1. Interacts with host C1QBP/P32. Interacts with host BIRC5/Survivin; this interaction is probably important for EBV episome maintenance in Burkitt's lymphoma host cells. Phosphorylation at Ser-385 increases the nuclear import efficiency of EBNA1. Post-translationally, phosphorylation at Ser-393 is required for interaction with CSNK2B.

The protein resides in the host nucleus. Functionally, responsible for the origin of replication (oriP) dependent replication and maintenance of viral episomes during latent infection. EBNA1 dimer interacts with the DS (dyad symmetry) element within the origin of replication oriP and with a host mitotic chromosome to initiate viral DNA replication during latency. EBNA1 binding to DS recruits the host origin recognition complex (ORC). Governs the faithful mitotic segregation of the viral episomes by binding both the FR (family of repeats) element within oriP and the host mitotic chromosomes. Forms a cell cycle-dependent tyrosine-dependent DNA cross-link and single-strand cleavage at oriP required for terminating replication and maintaining viral episomes. Counteracts the stabilization of host p53/TP53 by host USP7, thereby decreasing apoptosis and increasing host cell survival. Induces degradation of host PML through the ubiquitin-proteasome system, which promotes lytic reactivation and may impair the host cell DNA repair. Increases the association of CK2 with PML proteins which increases the phosphorylation of PML proteins by CK2, triggering the polyubiquitylation and degradation of PML. Displays inhibitory effects on a SUMO2-modified complex that includes STUB1, KAP1 and USP7. This inhibitory effect possibly participates to the maintenance of latency linked to PML silencing. This is Epstein-Barr nuclear antigen 1 (EBNA1) from Homo sapiens (Human).